The following is a 343-amino-acid chain: Methylthioribose-1-phosphate isomerase (343 aa).

Residues 48–50, Arg88, and Gln193 contribute to the substrate site; that span reads RGA. Catalysis depends on Asp234, which acts as the Proton donor. 244–245 contacts substrate; that stretch reads NK.

The protein belongs to the eIF-2B alpha/beta/delta subunits family. MtnA subfamily.

The enzyme catalyses 5-(methylsulfanyl)-alpha-D-ribose 1-phosphate = 5-(methylsulfanyl)-D-ribulose 1-phosphate. It functions in the pathway amino-acid biosynthesis; L-methionine biosynthesis via salvage pathway; L-methionine from S-methyl-5-thio-alpha-D-ribose 1-phosphate: step 1/6. Catalyzes the interconversion of methylthioribose-1-phosphate (MTR-1-P) into methylthioribulose-1-phosphate (MTRu-1-P). The chain is Methylthioribose-1-phosphate isomerase from Thermotoga maritima (strain ATCC 43589 / DSM 3109 / JCM 10099 / NBRC 100826 / MSB8).